The chain runs to 537 residues: uncharacterized protein (537 aa).

6 consecutive transmembrane segments (helical) span residues 5–25, 40–60, 63–83, 115–135, 149–169, and 197–217; these read IGLG…PWFV, LAVA…FFGW, VLWV…MAVV, GLYY…HLEG, VYLL…WVTL, and VGIV…ALVI.

It localises to the plastid. The protein localises to the chloroplast membrane. This is an uncharacterized protein from Ostreococcus tauri.